The following is a 207-amino-acid chain: Phosphatidylinositol phosphate synthase (207 aa).

2 consecutive transmembrane segments (helical) span residues 21-44 (LRAH…MALI) and 50-67 (WLWQ…SDSL). 28-31 (DVVT) serves as a coordination point for a CDP-1,2-diacyl-sn-glycerol. Mg(2+)-binding residues include D65 and D68. Residues G69, R73, and S79 each coordinate a CDP-1,2-diacyl-sn-glycerol. 2 residues coordinate Mg(2+): D86 and D90. Transmembrane regions (helical) follow at residues 88–106 (TLDR…LYFA), 112–131 (VLWT…TSYV), 152–170 (RLLV…RVGA), and 176–195 (VVAL…ITVV). The Proton acceptor role is filled by D90.

This sequence belongs to the CDP-alcohol phosphatidyltransferase class-I family. Homodimer. Requires Mg(2+) as cofactor.

The protein localises to the cell membrane. It catalyses the reaction a CDP-1,2-diacyl-sn-glycerol + 1D-myo-inositol 3-phosphate = a 1,2-diacyl-sn-glycero-3-phospho-(1D-myo-inositol-3-phosphate) + CMP + H(+). The catalysed reaction is 1,2-di-(9Z-octadecenoyl)-sn-glycero-3-cytidine-5'-diphosphate + 1D-myo-inositol 3-phosphate = 1,2-di-(9Z-octadecenoyl)-sn-glycero-3-phospho-(1D-myo-inositol-3-phosphate) + CMP + H(+). It functions in the pathway phospholipid metabolism; phosphatidylinositol phosphate biosynthesis. Functionally, catalyzes the conjugation of the 1'-hydroxyl group of D-myo-inositol-3-phosphate (also named L-myo-inositol-1-phosphate) with a lipid tail of cytidine diphosphate diacylglycerol (CDP-DAG), forming phosphatidylinositol phosphate (PIP) and CMP. PIP is a precursor of phosphatidylinositol (PI) which is an essential lipid required for cell wall formation. The protein is Phosphatidylinositol phosphate synthase of Cutibacterium acnes (strain DSM 16379 / KPA171202) (Propionibacterium acnes).